Here is a 483-residue protein sequence, read N- to C-terminus: UDP-N-acetylmuramoyl-L-alanyl-D-glutamate--2,6-diaminopimelate ligase 2 (483 aa).

A UDP-N-acetyl-alpha-D-muramoyl-L-alanyl-D-glutamate-binding site is contributed by serine 30. An ATP-binding site is contributed by 111 to 117; the sequence is GTNGKTT. Residues 156–157, threonine 183, and arginine 191 each bind UDP-N-acetyl-alpha-D-muramoyl-L-alanyl-D-glutamate; that span reads TT. An N6-carboxylysine modification is found at lysine 223. Residues arginine 380, 404 to 407, glycine 456, and glutamate 460 each bind meso-2,6-diaminopimelate; that span reads DNPR. A Meso-diaminopimelate recognition motif motif is present at residues 404–407; the sequence is DNPR.

It belongs to the MurCDEF family. MurE subfamily. Mg(2+) is required as a cofactor. Post-translationally, carboxylation is probably crucial for Mg(2+) binding and, consequently, for the gamma-phosphate positioning of ATP.

Its subcellular location is the cytoplasm. The enzyme catalyses UDP-N-acetyl-alpha-D-muramoyl-L-alanyl-D-glutamate + meso-2,6-diaminopimelate + ATP = UDP-N-acetyl-alpha-D-muramoyl-L-alanyl-gamma-D-glutamyl-meso-2,6-diaminopimelate + ADP + phosphate + H(+). It functions in the pathway cell wall biogenesis; peptidoglycan biosynthesis. Its function is as follows. Catalyzes the addition of meso-diaminopimelic acid to the nucleotide precursor UDP-N-acetylmuramoyl-L-alanyl-D-glutamate (UMAG) in the biosynthesis of bacterial cell-wall peptidoglycan. The sequence is that of UDP-N-acetylmuramoyl-L-alanyl-D-glutamate--2,6-diaminopimelate ligase 2 from Clostridium acetobutylicum (strain ATCC 824 / DSM 792 / JCM 1419 / IAM 19013 / LMG 5710 / NBRC 13948 / NRRL B-527 / VKM B-1787 / 2291 / W).